Consider the following 84-residue polypeptide: Small ribosomal subunit protein uS17 (84 aa).

This sequence belongs to the universal ribosomal protein uS17 family. As to quaternary structure, part of the 30S ribosomal subunit.

In terms of biological role, one of the primary rRNA binding proteins, it binds specifically to the 5'-end of 16S ribosomal RNA. This Clostridium botulinum (strain Okra / Type B1) protein is Small ribosomal subunit protein uS17.